A 298-amino-acid chain; its full sequence is Nucleotide-binding protein Csal_2229 (298 aa).

Residue glycine 8–serine 15 participates in ATP binding. Aspartate 59–asparagine 62 provides a ligand contact to GTP.

The protein belongs to the RapZ-like family.

In terms of biological role, displays ATPase and GTPase activities. The protein is Nucleotide-binding protein Csal_2229 of Chromohalobacter salexigens (strain ATCC BAA-138 / DSM 3043 / CIP 106854 / NCIMB 13768 / 1H11).